Consider the following 268-residue polypeptide: MINIQNTILGKIVDRKHEDLAARLKQRNLQDVEELAKAATPVRGFANALQHKRPGVIAEIKKASPSKGIIRADFNPAEIAQQYEQAGAACLSVLTDVDFFQGADENIAIARNHCTLPALRKDFLVDPYNVVEARALHADCILLIVACLSDQQLEEMSKTAFEHQLDVLVEVHDEEELERALKLSEQCLLGVNNRNLKTFDVDLNTTIRLKKLLPASRLLITESGIATPDDVRMMQEHDIHSFLVGESFMKQPRPDQAFTALFGQPQTV.

Belongs to the TrpC family.

It catalyses the reaction 1-(2-carboxyphenylamino)-1-deoxy-D-ribulose 5-phosphate + H(+) = (1S,2R)-1-C-(indol-3-yl)glycerol 3-phosphate + CO2 + H2O. The protein operates within amino-acid biosynthesis; L-tryptophan biosynthesis; L-tryptophan from chorismate: step 4/5. The chain is Indole-3-glycerol phosphate synthase from Acinetobacter baumannii (strain SDF).